The sequence spans 88 residues: Small ribosomal subunit protein uS15 (88 aa).

Belongs to the universal ribosomal protein uS15 family. In terms of assembly, part of the 30S ribosomal subunit. Forms a bridge to the 50S subunit in the 70S ribosome, contacting the 23S rRNA.

Its function is as follows. One of the primary rRNA binding proteins, it binds directly to 16S rRNA where it helps nucleate assembly of the platform of the 30S subunit by binding and bridging several RNA helices of the 16S rRNA. In terms of biological role, forms an intersubunit bridge (bridge B4) with the 23S rRNA of the 50S subunit in the ribosome. The polypeptide is Small ribosomal subunit protein uS15 (Pelobacter propionicus (strain DSM 2379 / NBRC 103807 / OttBd1)).